The sequence spans 449 residues: Putative glycosyltransferase 7 (449 aa).

Topologically, residues 1-32 (MVSPETSSSHYQSSPMAKYAGTRTRPVVCISD) are cytoplasmic. Residues 33–53 (VVLFLGGAFMSLILVWSFFSF) traverse the membrane as a helical; Signal-anchor for type II membrane protein segment. Topologically, residues 54-449 (SSISPNLTVK…VPFDYPDEPW (396 aa)) are lumenal. Residues N59, N123, and N332 are each glycosylated (N-linked (GlcNAc...) asparagine).

The protein belongs to the glycosyltransferase 34 family.

The protein localises to the golgi apparatus membrane. Probable glycosyltransferase that may be involved in the biosynthesis of xyloglucan. This chain is Putative glycosyltransferase 7 (GT7), found in Arabidopsis thaliana (Mouse-ear cress).